The primary structure comprises 310 residues: ADP-L-glycero-D-manno-heptose-6-epimerase (310 aa).

Residues 10 to 11, 31 to 32, K38, K53, 75 to 79, and N92 each bind NADP(+); these read FI, DN, and EGACS. Y140 (proton acceptor) is an active-site residue. Residue K144 coordinates NADP(+). N169 is a substrate binding site. V170 and K178 together coordinate NADP(+). Catalysis depends on K178, which acts as the Proton acceptor. Residues S180, H187, 201–204, R209, and Y272 each bind substrate; that span reads FEGS.

It belongs to the NAD(P)-dependent epimerase/dehydratase family. HldD subfamily. Homopentamer. Requires NADP(+) as cofactor.

The enzyme catalyses ADP-D-glycero-beta-D-manno-heptose = ADP-L-glycero-beta-D-manno-heptose. It functions in the pathway nucleotide-sugar biosynthesis; ADP-L-glycero-beta-D-manno-heptose biosynthesis; ADP-L-glycero-beta-D-manno-heptose from D-glycero-beta-D-manno-heptose 7-phosphate: step 4/4. Its function is as follows. Catalyzes the interconversion between ADP-D-glycero-beta-D-manno-heptose and ADP-L-glycero-beta-D-manno-heptose via an epimerization at carbon 6 of the heptose. This is ADP-L-glycero-D-manno-heptose-6-epimerase from Salmonella dublin (strain CT_02021853).